The primary structure comprises 387 residues: Mannitol-1-phosphate 5-dehydrogenase (387 aa).

3–14 (AVHFGAGNIGRG) contributes to the NAD(+) binding site.

The protein belongs to the mannitol dehydrogenase family.

The catalysed reaction is D-mannitol 1-phosphate + NAD(+) = beta-D-fructose 6-phosphate + NADH + H(+). This is Mannitol-1-phosphate 5-dehydrogenase from Pseudarthrobacter chlorophenolicus (strain ATCC 700700 / DSM 12829 / CIP 107037 / JCM 12360 / KCTC 9906 / NCIMB 13794 / A6) (Arthrobacter chlorophenolicus).